A 205-amino-acid chain; its full sequence is Ribonuclease HII (205 aa).

Positions 14-201 constitute an RNase H type-2 domain; it reads EIVAGVDEAG…KGNINHSAIL (188 aa). Positions 20, 21, and 111 each coordinate a divalent metal cation.

The protein belongs to the RNase HII family. Mn(2+) is required as a cofactor. Requires Mg(2+) as cofactor.

It is found in the cytoplasm. The catalysed reaction is Endonucleolytic cleavage to 5'-phosphomonoester.. Its function is as follows. Endonuclease that specifically degrades the RNA of RNA-DNA hybrids. The protein is Ribonuclease HII of Orientia tsutsugamushi (strain Boryong) (Rickettsia tsutsugamushi).